The primary structure comprises 189 residues: Peptidyl-tRNA hydrolase (189 aa).

Tyrosine 17 provides a ligand contact to tRNA. The active-site Proton acceptor is histidine 22. TRNA contacts are provided by phenylalanine 65, asparagine 67, and asparagine 113.

The protein belongs to the PTH family. As to quaternary structure, monomer.

The protein localises to the cytoplasm. The enzyme catalyses an N-acyl-L-alpha-aminoacyl-tRNA + H2O = an N-acyl-L-amino acid + a tRNA + H(+). Hydrolyzes ribosome-free peptidyl-tRNAs (with 1 or more amino acids incorporated), which drop off the ribosome during protein synthesis, or as a result of ribosome stalling. Functionally, catalyzes the release of premature peptidyl moieties from peptidyl-tRNA molecules trapped in stalled 50S ribosomal subunits, and thus maintains levels of free tRNAs and 50S ribosomes. The protein is Peptidyl-tRNA hydrolase of Mycoplasma genitalium (strain ATCC 33530 / DSM 19775 / NCTC 10195 / G37) (Mycoplasmoides genitalium).